The chain runs to 147 residues: Myoglobin (147 aa).

Residues 2 to 141 enclose the Globin domain; the sequence is ADFDMVLKCW…IITDMEADYK (140 aa). Position 60 (His-60) interacts with nitrite. His-60 contributes to the O2 binding site. A heme b-binding site is contributed by His-89.

Belongs to the globin family. Monomeric.

Its subcellular location is the cytoplasm. The protein resides in the sarcoplasm. It catalyses the reaction Fe(III)-heme b-[protein] + nitric oxide + H2O = Fe(II)-heme b-[protein] + nitrite + 2 H(+). The catalysed reaction is H2O2 + AH2 = A + 2 H2O. Its function is as follows. Monomeric heme protein which primary function is to store oxygen and facilitate its diffusion within muscle tissues. Reversibly binds oxygen through a pentacoordinated heme iron and enables its timely and efficient release as needed during periods of heightened demand. Depending on the oxidative conditions of tissues and cells, and in addition to its ability to bind oxygen, it also has a nitrite reductase activity whereby it regulates the production of bioactive nitric oxide. Under stress conditions, like hypoxia and anoxia, it also protects cells against reactive oxygen species thanks to its pseudoperoxidase activity. The sequence is that of Myoglobin (mb) from Channichthys rhinoceratus (Unicorn icefish).